The following is a 126-amino-acid chain: Prefoldin subunit beta (126 aa).

The protein belongs to the prefoldin subunit beta family. In terms of assembly, heterohexamer of two alpha and four beta subunits.

Its subcellular location is the cytoplasm. Its function is as follows. Molecular chaperone capable of stabilizing a range of proteins. Seems to fulfill an ATP-independent, HSP70-like function in archaeal de novo protein folding. The polypeptide is Prefoldin subunit beta (Saccharolobus islandicus (strain Y.N.15.51 / Yellowstone #2) (Sulfolobus islandicus)).